The chain runs to 1021 residues: Ubiquitin-activating enzyme E1 1 (1021 aa).

3 residues coordinate ATP: R22, A442, and D468. Residue D470 coordinates Mg(2+). Residues R479, K492, V518, and 542 to 543 (DN) contribute to the ATP site. Residue D542 coordinates Mg(2+). The Glycyl thioester intermediate role is filled by C598.

Belongs to the ubiquitin-activating E1 family. In terms of assembly, monomer.

Its subcellular location is the cytoplasm. The protein resides in the nucleus. It carries out the reaction ATP + ubiquitin + [E1 ubiquitin-activating enzyme]-L-cysteine = AMP + diphosphate + S-ubiquitinyl-[E1 ubiquitin-activating enzyme]-L-cysteine.. Its pathway is protein modification; protein ubiquitination. In terms of biological role, E1 ubiquitin-activating enzyme that catalyzes the first step in ubiquitin conjugation to mark cellular proteins for degradation through the ubiquitin-proteasome system. Activates ubiquitin by first adenylating its C-terminal glycine residue with ATP, and thereafter linking this residue to the side chain of a cysteine residue in E1, yielding a ubiquitin-E1 thioester and free AMP. The protein is Ubiquitin-activating enzyme E1 1 (UBA1) of Candida albicans (strain WO-1) (Yeast).